The following is a 242-amino-acid chain: Ferritin, mitochondrial (242 aa).

The N-terminal 49 residues, 1–49, are a transit peptide targeting the mitochondrion; sequence MLPCSLFLPKHISTSLVFLRSARHGFALLPRWVPRLSSDYPPAAPIRLL. A Ferritin-like diiron domain is found at 70–219; the sequence is QNFHPDSEAA…DHVNNLVKMG (150 aa). Positions 87, 122, 125, 167, and 201 each coordinate Fe cation.

The protein belongs to the ferritin family. Homooligomer of 24 subunits. The functional molecule is roughly spherical and contains a central cavity into which the polymeric mineral iron core is deposited.

It localises to the mitochondrion. The enzyme catalyses 4 Fe(2+) + O2 + 4 H(+) = 4 Fe(3+) + 2 H2O. Catalyzes the oxidation of ferrous iron(II) to ferric iron(III) and stores iron in a soluble, non-toxic, readily available form. Important for iron homeostasis. Iron is taken up in the ferrous form and deposited as ferric hydroxides after oxidation. The sequence is that of Ferritin, mitochondrial from Bos taurus (Bovine).